We begin with the raw amino-acid sequence, 371 residues long: Histidinol-phosphate aminotransferase (371 aa).

Lysine 229 bears the N6-(pyridoxal phosphate)lysine mark.

This sequence belongs to the class-II pyridoxal-phosphate-dependent aminotransferase family. Histidinol-phosphate aminotransferase subfamily. Homodimer. Pyridoxal 5'-phosphate is required as a cofactor.

The catalysed reaction is L-histidinol phosphate + 2-oxoglutarate = 3-(imidazol-4-yl)-2-oxopropyl phosphate + L-glutamate. Its pathway is amino-acid biosynthesis; L-histidine biosynthesis; L-histidine from 5-phospho-alpha-D-ribose 1-diphosphate: step 7/9. This is Histidinol-phosphate aminotransferase from Roseiflexus castenholzii (strain DSM 13941 / HLO8).